A 70-amino-acid chain; its full sequence is Large ribosomal subunit protein uL29 (70 aa).

It belongs to the universal ribosomal protein uL29 family.

The protein is Large ribosomal subunit protein uL29 of Clostridium botulinum (strain Eklund 17B / Type B).